The primary structure comprises 473 residues: Ribulose bisphosphate carboxylase large chain (473 aa).

Substrate is bound by residues N116 and T166. K168 (proton acceptor) is an active-site residue. K170 contributes to the substrate binding site. Mg(2+) is bound by residues K194, D196, and E197. Position 194 is an N6-carboxylysine (K194). Catalysis depends on H287, which acts as the Proton acceptor. 3 residues coordinate substrate: R288, H320, and S372.

The protein belongs to the RuBisCO large chain family. Type I subfamily. In terms of assembly, heterohexadecamer of 8 large chains and 8 small chains. Requires Mg(2+) as cofactor.

It carries out the reaction 2 (2R)-3-phosphoglycerate + 2 H(+) = D-ribulose 1,5-bisphosphate + CO2 + H2O. The catalysed reaction is D-ribulose 1,5-bisphosphate + O2 = 2-phosphoglycolate + (2R)-3-phosphoglycerate + 2 H(+). Functionally, ruBisCO catalyzes two reactions: the carboxylation of D-ribulose 1,5-bisphosphate, the primary event in carbon dioxide fixation, as well as the oxidative fragmentation of the pentose substrate. Both reactions occur simultaneously and in competition at the same active site. This chain is Ribulose bisphosphate carboxylase large chain, found in Nitrosomonas sp. (strain ENI-11).